The chain runs to 1188 residues: Integrin alpha-11 (1188 aa).

The signal sequence occupies residues 1–22 (MDFPRGLLVAWTLSLWPGFTDT). Topologically, residues 23–1141 (FNMDTRNPRV…ISKQEDWQVP (1119 aa)) are extracellular. FG-GAP repeat units lie at residues 24 to 85 (NMDT…NCTK) and 91 to 151 (VTLS…FSKT). A disulfide bridge connects residues C76 and C83. Residues N82 and N95 are each glycosylated (N-linked (GlcNAc...) asparagine). Disulfide bonds link C121–C139 and C129–C159. Residues 164-345 (DIVIVLDGSN…AALKDIVDAL (182 aa)) enclose the VWFA domain. N291, N331, N358, N449, and N462 each carry an N-linked (GlcNAc...) asparagine glycan. 5 FG-GAP repeats span residues 355–406 (TNKN…VIPH), 411–461 (LKEF…SMHN), 462–527 (NRSL…RFVY), 528–586 (NGTL…NILK), and 590–650 (QRIT…FEPS). Residues D488, N490, D492, and D496 each coordinate Ca(2+). Residue N528 is glycosylated (N-linked (GlcNAc...) asparagine). Positions 551, 553, 555, 559, 613, 615, 617, and 621 each coordinate Ca(2+). N-linked (GlcNAc...) asparagine glycosylation is present at N642. 3 disulfides stabilise this stretch: C659–C668, C674–C729, and C781–C787. A glycan (N-linked (GlcNAc...) asparagine) is linked at N694. The N-linked (GlcNAc...) asparagine glycan is linked to N857. C881 and C893 are disulfide-bonded. N-linked (GlcNAc...) asparagine glycosylation is found at N894, N973, N1031, N1039, and N1059. The chain crosses the membrane as a helical span at residues 1142-1164 (IWIIVGSTLGGLLLLALLVLALW). Over 1165–1188 (KLGFFKSAKRKREPGLGPIPKELK) the chain is Cytoplasmic.

It belongs to the integrin alpha chain family. In terms of assembly, heterodimer of an alpha and a beta subunit. Alpha-11 associates with beta-1. Interacts with RAB21.

Its subcellular location is the membrane. Functionally, integrin alpha-11/beta-1 is a receptor for collagen. The sequence is that of Integrin alpha-11 (Itga11) from Mus musculus (Mouse).